Reading from the N-terminus, the 356-residue chain is Carbohydrate sulfotransferase 10 (356 aa).

Over 1–6 (MHHQWL) the chain is Cytoplasmic. A helical; Signal-anchor for type II membrane protein transmembrane segment spans residues 7-27 (LLAACFWVIFMFMVASKFITL). At 28 to 356 (TFKDPDGYSA…GYQKPDFLLN (329 aa)) the chain is on the lumenal side. An N-linked (GlcNAc...) asparagine glycan is attached at asparagine 99. Residues 127–133 (PKVGNTQ) and 189–197 (RDPFERLIS) each bind 3'-phosphoadenylyl sulfate. Residues asparagine 228 and asparagine 316 are each glycosylated (N-linked (GlcNAc...) asparagine).

Belongs to the sulfotransferase 2 family. In terms of tissue distribution, in myogenic progenitors, it is ubiquitously expressed.

It localises to the golgi apparatus membrane. The enzyme catalyses 3-O-{beta-D-GlcA-(1-&gt;[3)-alpha-D-Xyl-(1-&gt;3)-beta-D-GlcA-(1-&gt;](n)-4)-beta-D-Xyl-(1-&gt;4)-Rib-ol-P-Rib-ol-P-3-beta-D-GalNAc-(1-&gt;3)-beta-D-GlcNAc-(1-&gt;4)-O-6-P-alpha-D-Man}-L-Thr-[protein] + 3'-phosphoadenylyl sulfate = 3-O-{O-3-S-beta-D-GlcA-(1-&gt;[3)-alpha-D-Xyl-(1-&gt;3)-beta-D-GlcA-(1-&gt;](n)-4)-beta-D-Xyl-(1-&gt;4)-Rib-ol-P-Rib-ol-P-3-beta-D-GalNAc-(1-&gt;3)-beta-D-GlcNAc-(1-&gt;4)-O-6-P-alpha-D-Man}-L-Thr-[protein] + adenosine 3',5'-bisphosphate + H(+). It catalyses the reaction 17beta-estradiol 3-O-(beta-D-glucuronate) + 3'-phosphoadenylyl sulfate = 17beta-estradiol 3-O-(3-sulfo-beta-D-glucuronate) + adenosine 3',5'-bisphosphate + H(+). It carries out the reaction 17beta-estradiol 3-O-(beta-D-glucuronate) 17-sulfate + 3'-phosphoadenylyl sulfate = 17beta-estradiol 3-O-(3-sulfo-beta-D-glucuronate) 17-sulfate + adenosine 3',5'-bisphosphate + H(+). The catalysed reaction is 17beta-estradiol 17-O-(beta-D-glucuronate) + 3'-phosphoadenylyl sulfate = 17beta-estradiol 17-O-(3-sulfo-beta-D-glucuronate) + adenosine 3',5'-bisphosphate + H(+). The enzyme catalyses 16alpha,17beta-estriol 3-O-(beta-D-glucuronate) + 3'-phosphoadenylyl sulfate = 16alpha,17beta-estriol 3-O-(3-sulfo-beta-D-glucuronate) + adenosine 3',5'-bisphosphate + H(+). It catalyses the reaction 16alpha,17beta-estriol 16-O-(beta-D-glucuronate) + 3'-phosphoadenylyl sulfate = 16alpha,17beta-estriol 16-O-(3-sulfo-beta-D-glucuronate) + adenosine 3',5'-bisphosphate + H(+). It carries out the reaction 16alpha,17beta-estriol 17-O-(beta-D-glucuronate) + 3'-phosphoadenylyl sulfate = 16alpha,17beta-estriol 17-O-(3-sulfo-beta-D-glucuronate) + adenosine 3',5'-bisphosphate + H(+). The catalysed reaction is estrone 3-O-(beta-D-glucuronate) + 3'-phosphoadenylyl sulfate = estrone 3-O-(3-sulfo-beta-D-glucuronate) + adenosine 3',5'-bisphosphate + H(+). The enzyme catalyses 3alpha,20alpha-dihydroxy-5beta-pregnane 3-O-(beta-D-glucuronate) + 3'-phosphoadenylyl sulfate = 3alpha,20alpha-dihydroxy-5beta-pregnane 3-O-(3-sulfo-beta-D-glucuronate) + adenosine 3',5'-bisphosphate + H(+). It catalyses the reaction testosterone 17-O-(beta-D-glucuronate) + 3'-phosphoadenylyl sulfate = testosterone 17-O-(3-sulfo-beta-D-glucuronate) + adenosine 3',5'-bisphosphate + H(+). It carries out the reaction 3beta-androst-5-en-17-one 3-O-(beta-D-glucuronate) + 3'-phosphoadenylyl sulfate = 3beta-androst-5-en-17-one 3-O-(3-sulfo-beta-D-glucuronate) + adenosine 3',5'-bisphosphate + H(+). The catalysed reaction is 3alpha,17alpha-dihydroxy-5beta-androstane-11-one-17beta-carboxylate 3-O-(beta-D-glucuronate) + 3'-phosphoadenylyl sulfate = 3alpha,17alpha-dihydroxy-5beta-androstane-11-one-17beta-carboxylate 3-O-(3-sulfo-beta-D-glucuronate) + adenosine 3',5'-bisphosphate + H(+). The enzyme catalyses 3alpha-hydroxyetiocholan-17-one 3-O-(beta-D-glucuronate) + 3'-phosphoadenylyl sulfate = 3alpha-hydroxyetiocholan-17-one 3-O-(3-sulfo-beta-D-glucuronate) + adenosine 3',5'-bisphosphate + H(+). Its pathway is steroid metabolism. The protein operates within protein modification; carbohydrate sulfation. Functionally, catalyzes the transfer of sulfate from 3'-phosphoadenylyl sulfate (PAPS) to position 3 of terminal glucuronic acid of both protein- and lipid-linked oligosaccharides. Participates in biosynthesis of HNK-1 carbohydrate structure 3-O-sulfo-beta-D-GlcA-(1-&gt;3)-beta-D-Gal-(1-&gt;4)-D-GlcNAc-R, a sulfated glucuronyl-lactosaminyl residue carried by many neural recognition molecules, which is involved in cell interactions during ontogenetic development and in synaptic plasticity in the adult. May be indirectly involved in synapse plasticity of the hippocampus, via its role in HNK-1 biosynthesis. Sulfates terminal glucuronyl residue of the laminin globular (LG)-domain binding epitope on DAG1/alpha-dystroglycan and prevents further polymerization by LARGE1 glycosyltransferase. Likely defines the chain length of LG epitope, conferring binding specificity to extracellular matrix components. Plays a role in down-regulating the steroid hormones. Sulfates glucuronidated estrogens and androgens with an impact in hormone cycle and fertility. Has a preference for glucuronyl moiety at the 3-hydroxyl group of a sterol ring rather than the 17-hydroxyl group, showing high catalytic efficiency for 17beta-estradiol 3-O-(beta-D-glucuronate) and dehydroepiandrosterone 3-O-(beta-D-glucuronate) hormones. The protein is Carbohydrate sulfotransferase 10 (Chst10) of Rattus norvegicus (Rat).